The following is a 91-amino-acid chain: UPF0386 protein Caul_4643 (91 aa).

This sequence belongs to the UPF0386 family.

The chain is UPF0386 protein Caul_4643 from Caulobacter sp. (strain K31).